Here is a 208-residue protein sequence, read N- to C-terminus: Ras-related protein M-Ras (208 aa).

Aspartate 21, glycine 22, glycine 23, valine 24, glycine 25, lysine 26, serine 27, alanine 28, phenylalanine 38, valine 39, proline 40, tyrosine 42, proline 44, and threonine 45 together coordinate GTP. Serine 27 lines the Mg(2+) pocket. Residues 42–50 (YDPTIEDSY) carry the Effector region motif. Positions 45 and 67 each coordinate Mg(2+). Positions 70, 126, 127, 129, 156, 157, and 158 each coordinate GTP. Cysteine 205 is modified (cysteine methyl ester). Cysteine 205 carries the S-geranylgeranyl cysteine lipid modification. The propeptide at 206–208 (VIL) is removed in mature form.

The protein belongs to the small GTPase superfamily. Ras family. In terms of assembly, component of the SHOC2-MRAS-PP1c (SMP) holophosphatase complex consisting of SHOC2, GTP-bound M-Ras/MRAS and the catalytic subunit of protein phosphatase 1 (either PPP1CA, PPP1CB or PPP1CC). Interacts (active GTP-bound form) with both SHOC2 and PP1c (all isoforms) to form a tertiary complex; SHOC2 and PP1c preferably bind M-Ras/MRAS, but they also bind K-Ras/KRAS, N-Ras/NRAS and H-Ras/HRAS. Interacts with RGL3. Interacts (active GTP-bound form preferentially) with RGS14. It depends on Mg(2+) as a cofactor. As to expression, expressed in skeletal muscle cells.

Its subcellular location is the cell membrane. The catalysed reaction is GTP + H2O = GDP + phosphate + H(+). Its function is as follows. Signal transducer in the Ras-MAPK signaling pathway that regulates cell proliferation and survival. Core component of the SHOC2-MRAS-PP1c (SMP) holophosphatase complex that regulates the MAPK pathway activation. The formation of the SMP complex only occurs when MRAS is GTP-bound. MRAS has low intrinsic GTPase activity and may require additional factors for activation. The SMP complex specifically dephosphorylates the inhibitory phosphorylation at 'Ser-259' of RAF1 kinase, 'Ser-365' of BRAF kinase and 'Ser-214' of ARAF kinase, stimulating their kinase activities. This chain is Ras-related protein M-Ras (Mras), found in Rattus norvegicus (Rat).